Reading from the N-terminus, the 182-residue chain is Methionine-R-sulfoxide reductase B2, mitochondrial (182 aa).

Residues 1 to 20 (MARLLWLLRGLTLGTAPRRA) constitute a mitochondrion transit peptide. The region spanning 51 to 180 (KSEWQKKLTP…NSVALKFKPR (130 aa)) is the MsrB domain. 4 residues coordinate Zn(2+): C90, C93, C146, and C149. The active-site Nucleophile is the C169.

Belongs to the MsrB Met sulfoxide reductase family. Interacts with DAOA; the interaction is direct. Requires Zn(2+) as cofactor. Ubiquitous. Detected in retina, ocular ciliary body, skeletal muscle, heart, colon, bone marrow, cerebellum, small intestine, fetal brain, fetal liver, kidney, spinal cord, lung, placenta and prostate.

The protein localises to the mitochondrion. The catalysed reaction is L-methionyl-[protein] + [thioredoxin]-disulfide + H2O = L-methionyl-(R)-S-oxide-[protein] + [thioredoxin]-dithiol. It catalyses the reaction [thioredoxin]-disulfide + L-methionine + H2O = L-methionine (R)-S-oxide + [thioredoxin]-dithiol. Its function is as follows. Methionine-sulfoxide reductase that specifically reduces methionine (R)-sulfoxide back to methionine. While in many cases, methionine oxidation is the result of random oxidation following oxidative stress, methionine oxidation is also a post-translational modification that takes place on specific residue. Upon oxidative stress, may play a role in the preservation of mitochondrial integrity by decreasing the intracellular reactive oxygen species build-up through its scavenging role, hence contributing to cell survival and protein maintenance. This is Methionine-R-sulfoxide reductase B2, mitochondrial (MSRB2) from Homo sapiens (Human).